The chain runs to 1149 residues: cGMP-specific 3',5'-cyclic phosphodiesterase (1149 aa).

Composition is skewed to low complexity over residues 1–19 (MHGT…DVSS) and 31–47 (ATSS…ASSS). The disordered stretch occupies residues 1-175 (MHGTVSRSSS…STTASQQDVD (175 aa)). Polar residues predominate over residues 48–59 (KPLTNGANKTAI). Residues 60–85 (STAAGVTPGAAPGPGCAAIPASGSSG) are compositionally biased toward low complexity. Residues 96-108 (QSNNNRPAGSNRS) are compositionally biased toward polar residues. Over residues 132-158 (SSSSPSQSPSQSQSQSQASIQTQTSQQ) the composition is skewed to low complexity. GAF domains follow at residues 278–430 (DIDV…GIGI) and 462–643 (NLEC…GLGI). The 324-residue stretch at 673-996 (SQDQTEKLTQ…RNWQDLAEKV (324 aa)) folds into the PDEase domain. Catalysis depends on histidine 749, which acts as the Proton donor. Residues histidine 753, histidine 789, aspartate 790, and aspartate 900 each contribute to the a divalent metal cation site. Disordered regions lie at residues 1037-1066 (QQSQ…TGAL) and 1096-1149 (SHVS…CALL). Composition is skewed to basic and acidic residues over residues 1042 to 1053 (GSEDSHTPEHQR) and 1096 to 1106 (SHVSEDMDDKS). The span at 1115-1135 (ASGSMGRMSASSSTSSAGGQM) shows a compositional bias: low complexity. Positions 1139–1149 (SKKRSKLCALL) are enriched in basic residues. The residue at position 1146 (cysteine 1146) is a Cysteine methyl ester. Cysteine 1146 carries the S-farnesyl cysteine lipid modification. Residues 1147-1149 (ALL) constitute a propeptide, removed in mature form.

It belongs to the cyclic nucleotide phosphodiesterase family. In terms of assembly, interacts with PrBP. A divalent metal cation serves as cofactor.

Its subcellular location is the cell membrane. It catalyses the reaction 3',5'-cyclic GMP + H2O = GMP + H(+). Its function is as follows. Has a role regulating cGMP transport in Malpighian tubule principal cells. This chain is cGMP-specific 3',5'-cyclic phosphodiesterase, found in Drosophila yakuba (Fruit fly).